We begin with the raw amino-acid sequence, 530 residues long: Bifunctional purine biosynthesis protein PurH (530 aa).

In terms of domain architecture, MGS-like spans 1–148 (MNNARPIRRA…KNHKDVTIVV (148 aa)).

The protein belongs to the PurH family.

It carries out the reaction (6R)-10-formyltetrahydrofolate + 5-amino-1-(5-phospho-beta-D-ribosyl)imidazole-4-carboxamide = 5-formamido-1-(5-phospho-D-ribosyl)imidazole-4-carboxamide + (6S)-5,6,7,8-tetrahydrofolate. The enzyme catalyses IMP + H2O = 5-formamido-1-(5-phospho-D-ribosyl)imidazole-4-carboxamide. It participates in purine metabolism; IMP biosynthesis via de novo pathway; 5-formamido-1-(5-phospho-D-ribosyl)imidazole-4-carboxamide from 5-amino-1-(5-phospho-D-ribosyl)imidazole-4-carboxamide (10-formyl THF route): step 1/1. It functions in the pathway purine metabolism; IMP biosynthesis via de novo pathway; IMP from 5-formamido-1-(5-phospho-D-ribosyl)imidazole-4-carboxamide: step 1/1. This is Bifunctional purine biosynthesis protein PurH from Aliivibrio fischeri (strain MJ11) (Vibrio fischeri).